Here is a 272-residue protein sequence, read N- to C-terminus: uncharacterized protein (272 aa).

Active-site residues include Asp71 and Glu163.

Belongs to the glycosyl hydrolase 25 family.

This is an uncharacterized protein from Escherichia coli (strain K12).